The chain runs to 509 residues: GMP synthase [glutamine-hydrolyzing] (509 aa).

A Glutamine amidotransferase type-1 domain is found at 4–193; it reads NVLILDFGSQ…LVKIAQVPQN (190 aa). Cysteine 79 acts as the Nucleophile in catalysis. Residues histidine 167 and glutamate 169 contribute to the active site. A GMPS ATP-PPase domain is found at 194 to 384; it reads FTPNAFVSDM…LGIDAELLGR (191 aa). 221–227 contacts ATP; sequence SGGVDST.

As to quaternary structure, homodimer.

The enzyme catalyses XMP + L-glutamine + ATP + H2O = GMP + L-glutamate + AMP + diphosphate + 2 H(+). It participates in purine metabolism; GMP biosynthesis; GMP from XMP (L-Gln route): step 1/1. Catalyzes the synthesis of GMP from XMP. This Flavobacterium psychrophilum (strain ATCC 49511 / DSM 21280 / CIP 103535 / JIP02/86) protein is GMP synthase [glutamine-hydrolyzing].